A 38-amino-acid polypeptide reads, in one-letter code: Large ribosomal subunit protein bL36 (38 aa).

This sequence belongs to the bacterial ribosomal protein bL36 family.

The protein is Large ribosomal subunit protein bL36 of Pseudothermotoga lettingae (strain ATCC BAA-301 / DSM 14385 / NBRC 107922 / TMO) (Thermotoga lettingae).